A 343-amino-acid polypeptide reads, in one-letter code: tRNA N6-adenosine threonylcarbamoyltransferase (343 aa).

Fe cation contacts are provided by histidine 120 and histidine 124. Residues 142-146 (VVSGG), aspartate 175, glycine 188, aspartate 192, and asparagine 281 each bind substrate. A Fe cation-binding site is contributed by aspartate 310.

This sequence belongs to the KAE1 / TsaD family. Requires Fe(2+) as cofactor.

The protein resides in the cytoplasm. It catalyses the reaction L-threonylcarbamoyladenylate + adenosine(37) in tRNA = N(6)-L-threonylcarbamoyladenosine(37) in tRNA + AMP + H(+). Required for the formation of a threonylcarbamoyl group on adenosine at position 37 (t(6)A37) in tRNAs that read codons beginning with adenine. Is involved in the transfer of the threonylcarbamoyl moiety of threonylcarbamoyl-AMP (TC-AMP) to the N6 group of A37, together with TsaE and TsaB. TsaD likely plays a direct catalytic role in this reaction. The polypeptide is tRNA N6-adenosine threonylcarbamoyltransferase (Bacillus cereus (strain ATCC 10987 / NRS 248)).